The following is a 208-amino-acid chain: UPF0319 protein VSAL_I2129 (208 aa).

The first 21 residues, 1–21, serve as a signal peptide directing secretion; that stretch reads MKFHSFLAAGLCLLTSLSASA.

This sequence belongs to the UPF0319 family.

The protein is UPF0319 protein VSAL_I2129 of Aliivibrio salmonicida (strain LFI1238) (Vibrio salmonicida (strain LFI1238)).